Consider the following 356-residue polypeptide: Nicotinate-nucleotide--dimethylbenzimidazole phosphoribosyltransferase (356 aa).

Glutamate 317 acts as the Proton acceptor in catalysis.

It belongs to the CobT family. Homodimer.

The catalysed reaction is 5,6-dimethylbenzimidazole + nicotinate beta-D-ribonucleotide = alpha-ribazole 5'-phosphate + nicotinate + H(+). Its pathway is nucleoside biosynthesis; alpha-ribazole biosynthesis; alpha-ribazole from 5,6-dimethylbenzimidazole: step 1/2. In terms of biological role, catalyzes the synthesis of alpha-ribazole-5'-phosphate from nicotinate mononucleotide (NAMN) and 5,6-dimethylbenzimidazole (DMB). In Salmonella agona (strain SL483), this protein is Nicotinate-nucleotide--dimethylbenzimidazole phosphoribosyltransferase.